Reading from the N-terminus, the 65-residue chain is Neurotoxin BmK AGAP-SYPU2 (65 aa).

The 63-residue stretch at 2 to 64 (KDGYIVDDKN…VPIRVPGRCN (63 aa)) folds into the LCN-type CS-alpha/beta domain. 4 cysteine pairs are disulfide-bonded: cysteine 12-cysteine 63, cysteine 16-cysteine 36, cysteine 22-cysteine 46, and cysteine 26-cysteine 48.

As to expression, expressed by the venom gland.

The protein localises to the secreted. In terms of biological role, alpha toxins bind voltage-independently at site-3 of sodium channels and inhibit the inactivation of the activated channels, thereby blocking neuronal transmission. In vivo, shows analgesic activity (ED(50) is 1.42 mg/kg) and antitumor activity against Ehrlich ascites tumor and S-180 fibrosarcoma models. In Olivierus martensii (Manchurian scorpion), this protein is Neurotoxin BmK AGAP-SYPU2.